Reading from the N-terminus, the 214-residue chain is Orotate phosphoribosyltransferase (214 aa).

Position 26 (Lys-26) interacts with 5-phospho-alpha-D-ribose 1-diphosphate. 34–35 (FF) serves as a coordination point for orotate. 5-phospho-alpha-D-ribose 1-diphosphate contacts are provided by residues 72–73 (YK), Arg-99, Lys-100, Lys-103, His-105, and 124–132 (DDVITAGTA). Orotate contacts are provided by Thr-128 and Arg-156.

The protein belongs to the purine/pyrimidine phosphoribosyltransferase family. PyrE subfamily. As to quaternary structure, homodimer. The cofactor is Mg(2+).

The catalysed reaction is orotidine 5'-phosphate + diphosphate = orotate + 5-phospho-alpha-D-ribose 1-diphosphate. Its pathway is pyrimidine metabolism; UMP biosynthesis via de novo pathway; UMP from orotate: step 1/2. Catalyzes the transfer of a ribosyl phosphate group from 5-phosphoribose 1-diphosphate to orotate, leading to the formation of orotidine monophosphate (OMP). This Pasteurella multocida (strain Pm70) protein is Orotate phosphoribosyltransferase.